Reading from the N-terminus, the 410-residue chain is Protein translocase subunit SecY (410 aa).

9 helical membrane passes run 61–81 (LSVFALGIIPYINATITIQIL), 106–126 (ITKYLSFCFAFIESLAIVLRL), 135–155 (LYFIVQTTLILISGAMLVMWL), 170–190 (VIIFVNIASAFAKFLLNQLFV), 195–215 (FLDFASYFALIVFSIACIVFV), 248–268 (QGGVMPIILASSLLALVDYVI), 289–309 (ILFLLLYSAFIIFFNYLYCSL), 349–369 (LFGSGFLAFIVLAPNFLEFVF), and 373–393 (VFKGLAVSSLLIVVGVAIDLI).

It belongs to the SecY/SEC61-alpha family. As to quaternary structure, component of the plastid Sec protein translocase complex, which is composed of at least SecY and SecE.

It is found in the plastid. It localises to the chloroplast thylakoid membrane. Its function is as follows. The central subunit of the protein translocation channel SecYE. Consists of two halves formed by TMs 1-5 and 6-10. These two domains form a lateral gate at the front which open onto the bilayer between TMs 2 and 7, and are clamped together by SecE at the back. The channel is closed by both a pore ring composed of hydrophobic SecY resides and a short helix (helix 2A) on the extracellular side of the membrane which forms a plug. This Cyanidium caldarium (Red alga) protein is Protein translocase subunit SecY.